The primary structure comprises 426 residues: Dihydroorotase (426 aa).

Positions 61 and 63 each coordinate Zn(2+). Residues 63 to 65 (HCR) and Asn95 each bind substrate. Zn(2+) is bound by residues Glu146, His180, His229, and Asp297. Residue Asp297 is part of the active site. His301 provides a ligand contact to substrate.

The protein belongs to the metallo-dependent hydrolases superfamily. DHOase family. Class I DHOase subfamily. Zn(2+) serves as cofactor.

The enzyme catalyses (S)-dihydroorotate + H2O = N-carbamoyl-L-aspartate + H(+). It participates in pyrimidine metabolism; UMP biosynthesis via de novo pathway; (S)-dihydroorotate from bicarbonate: step 3/3. Functionally, catalyzes the reversible cyclization of carbamoyl aspartate to dihydroorotate. The chain is Dihydroorotase from Methanopyrus kandleri (strain AV19 / DSM 6324 / JCM 9639 / NBRC 100938).